Consider the following 241-residue polypeptide: ATP synthase subunit a (241 aa).

Transmembrane regions (helical) follow at residues 30 to 50 (GQVF…ISFG), 91 to 111 (FIGT…LIPW), 128 to 148 (INTT…AGLS), 193 to 213 (LVVG…VMFL), and 214 to 234 (GLFT…YYIG).

The protein belongs to the ATPase A chain family. In terms of assembly, F-type ATPases have 2 components, CF(1) - the catalytic core - and CF(0) - the membrane proton channel. CF(1) has five subunits: alpha(3), beta(3), gamma(1), delta(1), epsilon(1). CF(0) has four main subunits: a, b, b' and c.

The protein resides in the cellular thylakoid membrane. Key component of the proton channel; it plays a direct role in the translocation of protons across the membrane. This Prochlorococcus marinus (strain AS9601) protein is ATP synthase subunit a.